The primary structure comprises 264 residues: Teichoic acids export ATP-binding protein TagH (264 aa).

Positions 24–243 (IKDALIPKNK…YEAFLKTFKK (220 aa)) constitute an ABC transporter domain. Residue 57-64 (GINGSGKS) participates in ATP binding.

Belongs to the ABC transporter superfamily. Teichoic acids exporter (TC 3.A.1.104.1) family. In terms of assembly, the complex is composed of two ATP-binding proteins (TagH) and two transmembrane proteins (TagG).

The protein resides in the cell membrane. The catalysed reaction is ATP + H2O + teichoic acidSide 1 = ADP + phosphate + teichoic acidSide 2.. In terms of biological role, part of the ABC transporter complex TagGH involved in teichoic acids export. Responsible for energy coupling to the transport system. In Staphylococcus epidermidis (strain ATCC 35984 / DSM 28319 / BCRC 17069 / CCUG 31568 / BM 3577 / RP62A), this protein is Teichoic acids export ATP-binding protein TagH.